Reading from the N-terminus, the 1064-residue chain is DNA-directed RNA polymerase subunit beta (1064 aa).

Belongs to the RNA polymerase beta chain family. In plastids the minimal PEP RNA polymerase catalytic core is composed of four subunits: alpha, beta, beta', and beta''. When a (nuclear-encoded) sigma factor is associated with the core the holoenzyme is formed, which can initiate transcription.

The protein resides in the plastid. The protein localises to the chloroplast. It carries out the reaction RNA(n) + a ribonucleoside 5'-triphosphate = RNA(n+1) + diphosphate. DNA-dependent RNA polymerase catalyzes the transcription of DNA into RNA using the four ribonucleoside triphosphates as substrates. The sequence is that of DNA-directed RNA polymerase subunit beta from Jasminum nudiflorum (Winter jasmine).